We begin with the raw amino-acid sequence, 117 residues long: Large ribosomal subunit protein bL20 (117 aa).

It belongs to the bacterial ribosomal protein bL20 family.

Binds directly to 23S ribosomal RNA and is necessary for the in vitro assembly process of the 50S ribosomal subunit. It is not involved in the protein synthesizing functions of that subunit. This chain is Large ribosomal subunit protein bL20, found in Roseiflexus sp. (strain RS-1).